A 762-amino-acid polypeptide reads, in one-letter code: Serine/threonine-protein kinase PLK4 (762 aa).

The Protein kinase domain maps to 14–268; the sequence is YEVQHLLGKG…LEQVLRHPFM (255 aa). ATP is bound by residues 20 to 28 and Lys-43; that span reads LGKGGFACV. Catalysis depends on Asp-139, which acts as the Proton acceptor. The region spanning 383–498 is the Cryptic POLO box 1 (CPB1) domain; that stretch reads AECISMPPLN…ARFVSLVKSK (116 aa). The Cryptic POLO box 2 (CPB2) domain occupies 499-602; the sequence is TPKVTYFSGL…GRRPTPEVMP (104 aa). In terms of domain architecture, POLO box spans 657 to 736; the sequence is PIKRLNVPGV…LPQVQMKLKS (80 aa).

The protein belongs to the protein kinase superfamily. Ser/Thr protein kinase family. CDC5/Polo subfamily. As to quaternary structure, homodimer. Post-translationally, ubiquitinated by the SCF(Slimb) ubiquitin ligase complex; leading to its degradation by the proteasome during interphase and regulating centriole number and ensuring the block to centriole reduplication.

Its subcellular location is the cytoplasm. The protein resides in the cytoskeleton. It is found in the microtubule organizing center. It localises to the centrosome. The protein localises to the centriole. The enzyme catalyses L-seryl-[protein] + ATP = O-phospho-L-seryl-[protein] + ADP + H(+). It catalyses the reaction L-threonyl-[protein] + ATP = O-phospho-L-threonyl-[protein] + ADP + H(+). Its function is as follows. Serine/threonine-protein kinase that plays a central role in centriole duplication. Able to trigger procentriole formation on the surface of the mother centriole cylinder, using mother centriole as a platform, leading to the recruitment of centriole biogenesis proteins such as sas-6. When overexpressed, it is able to induce centrosome amplification through the simultaneous generation of multiple procentrioles adjoining each parental centriole during S phase. Centrosome amplification following overexpression can initiate tumorigenesis, highlighting the importance of centrosome regulation in cancers. The protein is Serine/threonine-protein kinase PLK4 (SAK) of Drosophila grimshawi (Hawaiian fruit fly).